The chain runs to 311 residues: tRNA-cytidine(32) 2-sulfurtransferase (311 aa).

Residues 47-52 carry the PP-loop motif motif; it reads SGGKDS. [4Fe-4S] cluster is bound by residues cysteine 122, cysteine 125, and cysteine 213.

This sequence belongs to the TtcA family. In terms of assembly, homodimer. Requires Mg(2+) as cofactor. The cofactor is [4Fe-4S] cluster.

It is found in the cytoplasm. The enzyme catalyses cytidine(32) in tRNA + S-sulfanyl-L-cysteinyl-[cysteine desulfurase] + AH2 + ATP = 2-thiocytidine(32) in tRNA + L-cysteinyl-[cysteine desulfurase] + A + AMP + diphosphate + H(+). Its pathway is tRNA modification. Functionally, catalyzes the ATP-dependent 2-thiolation of cytidine in position 32 of tRNA, to form 2-thiocytidine (s(2)C32). The sulfur atoms are provided by the cysteine/cysteine desulfurase (IscS) system. This is tRNA-cytidine(32) 2-sulfurtransferase from Pectobacterium carotovorum subsp. carotovorum (strain PC1).